Here is a 631-residue protein sequence, read N- to C-terminus: 1-deoxy-D-xylulose-5-phosphate synthase (631 aa).

Thiamine diphosphate is bound by residues His-73 and 114–116 (GHS). Asp-145 contributes to the Mg(2+) binding site. Residues 146–147 (GA), Asn-174, Tyr-285, and Glu-366 each bind thiamine diphosphate. Asn-174 lines the Mg(2+) pocket.

The protein belongs to the transketolase family. DXPS subfamily. In terms of assembly, homodimer. It depends on Mg(2+) as a cofactor. The cofactor is thiamine diphosphate.

The enzyme catalyses D-glyceraldehyde 3-phosphate + pyruvate + H(+) = 1-deoxy-D-xylulose 5-phosphate + CO2. It functions in the pathway metabolic intermediate biosynthesis; 1-deoxy-D-xylulose 5-phosphate biosynthesis; 1-deoxy-D-xylulose 5-phosphate from D-glyceraldehyde 3-phosphate and pyruvate: step 1/1. In terms of biological role, catalyzes the acyloin condensation reaction between C atoms 2 and 3 of pyruvate and glyceraldehyde 3-phosphate to yield 1-deoxy-D-xylulose-5-phosphate (DXP). The chain is 1-deoxy-D-xylulose-5-phosphate synthase from Desulfitobacterium hafniense (strain Y51).